We begin with the raw amino-acid sequence, 719 residues long: MQYSIEINKNTEIFDIDKVAKQAAGAVLMRQGKSIVLATVAREEKQVEEDFLPLTVQYIEKAYAAGKIPGGYVKRETKPSDAETLTARIIDRSLRPLFPKGYAYPTQIVVMVLSADPKVDLQVMSLNAASVALYLSDIPMKAPVCGVRIGKIDGNFILNPNNEELQNSTLDLYVAGVKDELLMIEMRALPDQKENEIFIEAPYADVLTQTTSQNMNELSEDEILEALNLAQKAILNGSNAYEEAFSKHKKNSQIELKNEIEHPEILAFIENNFQKQIKEAINQMAKSERASELNKIAKEILNLEITKDWSEESVLNTLAKVKRKLIREQILNEGKRADGRSLNEVRPISIETNILPNAHGSCLFTRGQTQALVVATLGGENDAQMIDLLTEKNPISERFMVNYNFPGFSVGEASPIKAPGRRELGHGNLAKRALYPSVDENYPYIIRLVSEILESNGSSSMATVCGGSLALKAAGVPSLKLVAGVAMGLIFEDNKHAVLTDIMGLEDHDGDMDFKVAGSKDGVTALQMDIKLGGIDQETLKQALYQAKEGRIHILNIMEEAAKEIIVNEEVLPKLELFSVDPSKIVDIIGQAGKTIKEIIEKFGVSIDLDREKGEVKIAGSQNEQIKAAKDYIINITSSQKGTKKGSKDKDISGFELGQEFQGIVKKIAPFGAFVELKNGVDGLLHSSKSKHLNLSENQSLKVKISEIKNGKISVDLCE.

2 residues coordinate Mg(2+): aspartate 507 and aspartate 513. Residues 573 to 633 (PKLELFSVDP…EQIKAAKDYI (61 aa)) enclose the KH domain. The S1 motif domain maps to 658–719 (GQEFQGIVKK…NGKISVDLCE (62 aa)).

This sequence belongs to the polyribonucleotide nucleotidyltransferase family. It depends on Mg(2+) as a cofactor.

The protein resides in the cytoplasm. It catalyses the reaction RNA(n+1) + phosphate = RNA(n) + a ribonucleoside 5'-diphosphate. Its function is as follows. Involved in mRNA degradation. Catalyzes the phosphorolysis of single-stranded polyribonucleotides processively in the 3'- to 5'-direction. This chain is Polyribonucleotide nucleotidyltransferase, found in Campylobacter jejuni subsp. jejuni serotype O:23/36 (strain 81-176).